The following is a 122-amino-acid chain: Large ribosomal subunit protein uL14 (122 aa).

The protein belongs to the universal ribosomal protein uL14 family. In terms of assembly, part of the 50S ribosomal subunit. Forms a cluster with proteins L3 and L19. In the 70S ribosome, L14 and L19 interact and together make contacts with the 16S rRNA in bridges B5 and B8.

Binds to 23S rRNA. Forms part of two intersubunit bridges in the 70S ribosome. This chain is Large ribosomal subunit protein uL14, found in Salinispora tropica (strain ATCC BAA-916 / DSM 44818 / JCM 13857 / NBRC 105044 / CNB-440).